We begin with the raw amino-acid sequence, 163 residues long: Secretory-abundant heat soluble protein 53582 (163 aa).

Residues 1-19 form the signal peptide; the sequence is MARLFVAVALFGVVAFAAA. The interval 22–51 is SAHS-c1; it reads EWTGKTWLGSWASTDRAENWEAFVDALGLP. Positions 67–95 are SAHS-c2; the sequence is YKQGDKYHHEVSIPSKNFKKAIEYTLGTE. Residues 108 to 157 form an SAHS-c3 region; sequence KYTEDGEKLVADVQIPSKNKQIHDIYEVQGDTLTKTYKVGDVVAKRWFTR.

It belongs to the Secretory-abundant heat soluble protein (SAHS) family.

It is found in the secreted. Its function is as follows. Secreted heat soluble protein acting as a molecular shield in water-deficient condition. Tardigrade-specific intrinsically disordered proteins (TDPs) are essential for desiccation tolerance by forming non-crystalline amorphous solids upon desiccation, and this vitrified state mirrors their protective capabilities. The polypeptide is Secretory-abundant heat soluble protein 53582 (Hypsibius exemplaris (Freshwater tardigrade)).